The chain runs to 564 residues: CTP synthase (564 aa).

Residues 1–265 (MTKFVFVTGG…DEIVCHRLDI (265 aa)) are amidoligase domain. S13 provides a ligand contact to CTP. S13 is a UTP binding site. ATP is bound by residues 14 to 19 (SLGKGI) and D71. Positions 71 and 139 each coordinate Mg(2+). Residues 146-148 (DIE), 186-191 (KTKPTQ), and K222 contribute to the CTP site. UTP contacts are provided by residues 186–191 (KTKPTQ) and K222. One can recognise a Glutamine amidotransferase type-1 domain in the interval 290–543 (SIALVGKYVD…IQAAISFAGQ (254 aa)). G351 provides a ligand contact to L-glutamine. C378 serves as the catalytic Nucleophile; for glutamine hydrolysis. L-glutamine-binding positions include 379–382 (LGMQ), E402, and R469. Residues H516 and E518 contribute to the active site.

The protein belongs to the CTP synthase family. Homotetramer.

The enzyme catalyses UTP + L-glutamine + ATP + H2O = CTP + L-glutamate + ADP + phosphate + 2 H(+). It carries out the reaction L-glutamine + H2O = L-glutamate + NH4(+). The catalysed reaction is UTP + NH4(+) + ATP = CTP + ADP + phosphate + 2 H(+). It participates in pyrimidine metabolism; CTP biosynthesis via de novo pathway; CTP from UDP: step 2/2. With respect to regulation, allosterically activated by GTP, when glutamine is the substrate; GTP has no effect on the reaction when ammonia is the substrate. The allosteric effector GTP functions by stabilizing the protein conformation that binds the tetrahedral intermediate(s) formed during glutamine hydrolysis. Inhibited by the product CTP, via allosteric rather than competitive inhibition. Its function is as follows. Catalyzes the ATP-dependent amination of UTP to CTP with either L-glutamine or ammonia as the source of nitrogen. Regulates intracellular CTP levels through interactions with the four ribonucleotide triphosphates. The chain is CTP synthase from Nitrosomonas europaea (strain ATCC 19718 / CIP 103999 / KCTC 2705 / NBRC 14298).